The primary structure comprises 431 residues: Nuclear receptor subfamily 1 group I member 2 (431 aa).

A DNA-binding region (nuclear receptor) is located at residues 35–104; it reads LQICRVCGDK…RLRKCLESGM (70 aa). 2 consecutive NR C4-type zinc fingers follow at residues 38-58 and 74-99; these read CRVC…CEGC and CPFR…LRKC. Positions 63-89 match the Bipartite nuclear localization signal motif; the sequence is RRAMKRNVRLRCPFRKGTCEITRKTRR. A hinge region spans residues 105–142; that stretch reads KKEMIMSDAAVEQRRALIKRKKREKIEAPPPGGQGLTE. The 288-residue stretch at 143–430 folds into the NR LBD domain; sequence EQQALIQELM…LMQELFSSTD (288 aa). Hyperforin-binding positions include Ser244 and 282-285; that span reads ILRF.

Belongs to the nuclear hormone receptor family. NR1 subfamily. Heterodimer with RXRA. Interacts with NCOA1. Interacts (via domain NR LBD) with CRY1 and CRY2 in a ligand-dependent manner.

It is found in the nucleus. Functionally, nuclear receptor that binds and is activated by a variety of endogenous and xenobiotic compounds. Transcription factor that activates the transcription of multiple genes involved in the metabolism and secretion of potentially harmful xenobiotics, endogenous compounds and drugs. Response to specific ligands is species-specific, due to differences in the ligand-binding domain. Binds to a response element in the promoters of the CYP3A4 and ABCB1/MDR1 genes. Activated by naturally occurring steroids such as pregnenolone and progesterone, the cholesterol metabolite 5-beta-cholestane-3-alpha,7-alpha,12-alpha-triol, synthetic glucocorticoids and antiglucocorticoids and 16-alpha-carbonitrile (PCN). The protein is Nuclear receptor subfamily 1 group I member 2 (Nr1i2) of Mus musculus (Mouse).